The primary structure comprises 124 residues: MMIMKVKEVMNKDFIKISPNDIGGEVVQTLYKEKKNYAPVIEDGKLVGWITALDLLIGCKHSKIEDLMLLIDEIKILKENDEVTDELIDEIIKNEDIAYPVINDRDEVVGTLSVFDLLKYYKNR.

CBS domains lie at 10 to 67 (MNKD…IEDL) and 70 to 124 (LIDE…YKNR).

In terms of assembly, exhibits a pH-dependent oligomerization state: at pH 7, the dominant species is a dimer, where each monomer is a two-CBS domain protein, and at pH 4.5-4.8, the dominant species is a tetramer, with an oblong shape. At pH 2.5, there is formation of intermolecular hydrogen bonds, suggesting the presence of high-molecular weight species. The physiological dimeric species is thermal and chemically very stable.

The protein is CBS domain-containing protein MJ0729 of Methanocaldococcus jannaschii (strain ATCC 43067 / DSM 2661 / JAL-1 / JCM 10045 / NBRC 100440) (Methanococcus jannaschii).